A 416-amino-acid chain; its full sequence is Histidine--tRNA ligase (416 aa).

This sequence belongs to the class-II aminoacyl-tRNA synthetase family. As to quaternary structure, homodimer.

It localises to the cytoplasm. The enzyme catalyses tRNA(His) + L-histidine + ATP = L-histidyl-tRNA(His) + AMP + diphosphate + H(+). The polypeptide is Histidine--tRNA ligase (Clostridium kluyveri (strain NBRC 12016)).